The following is a 180-amino-acid chain: uncharacterized protein (180 aa).

This sequence belongs to the isochorismatase family.

This is an uncharacterized protein from Bacillus subtilis (strain 168).